A 396-amino-acid polypeptide reads, in one-letter code: Tryptophan synthase beta chain (396 aa).

At Lys88 the chain carries N6-(pyridoxal phosphate)lysine.

It belongs to the TrpB family. Tetramer of two alpha and two beta chains. Pyridoxal 5'-phosphate is required as a cofactor.

It carries out the reaction (1S,2R)-1-C-(indol-3-yl)glycerol 3-phosphate + L-serine = D-glyceraldehyde 3-phosphate + L-tryptophan + H2O. Its pathway is amino-acid biosynthesis; L-tryptophan biosynthesis; L-tryptophan from chorismate: step 5/5. The beta subunit is responsible for the synthesis of L-tryptophan from indole and L-serine. This Shewanella sp. (strain MR-7) protein is Tryptophan synthase beta chain.